We begin with the raw amino-acid sequence, 313 residues long: Porphobilinogen deaminase (313 aa).

The residue at position 242 (Cys242) is an S-(dipyrrolylmethanemethyl)cysteine.

It belongs to the HMBS family. In terms of assembly, monomer. Requires dipyrromethane as cofactor.

It carries out the reaction 4 porphobilinogen + H2O = hydroxymethylbilane + 4 NH4(+). Its pathway is porphyrin-containing compound metabolism; protoporphyrin-IX biosynthesis; coproporphyrinogen-III from 5-aminolevulinate: step 2/4. Tetrapolymerization of the monopyrrole PBG into the hydroxymethylbilane pre-uroporphyrinogen in several discrete steps. This is Porphobilinogen deaminase from Pseudomonas paraeruginosa (strain DSM 24068 / PA7) (Pseudomonas aeruginosa (strain PA7)).